Reading from the N-terminus, the 2671-residue chain is Inositol 1,4,5-trisphosphate-gated calcium channel ITPR3 (2671 aa).

Residues 1 to 2202 (MSEMSSFLHI…LIYWFSRRMT (2202 aa)) lie on the Cytoplasmic side of the membrane. 5 consecutive MIR domains span residues 113 to 173 (GDVV…LRSN), 174 to 224 (GDNV…INLF), 232 to 288 (EEVL…VEVV), 295 to 372 (GGAG…LDPT), and 378 to 434 (DSFV…IVSV). Residues Arg-266, Thr-268, Leu-269, and Arg-270 each contribute to the 1D-myo-inositol 1,4,5-trisphosphate site. Residues 322 to 342 (SYKGDASDPKAAGMGAQGRTG) are disordered. Arg-503, Lys-507, Arg-510, Tyr-567, Arg-568, and Lys-569 together coordinate 1D-myo-inositol 1,4,5-trisphosphate. Arg-743 contacts Ca(2+). Phosphoserine is present on residues Ser-916 and Ser-934. Ca(2+)-binding residues include Glu-1122 and Glu-1125. 2 disordered regions span residues 1132 to 1163 (GSGKGEEVEAGAAKDKKERPTDEEGFLHPPGE) and 1809 to 1848 (NDLGSQPHEDREPVDPTTKGRVASFSIPGSSSRYSLGPSL). 3 positions are modified to phosphoserine: Ser-1813, Ser-1832, and Ser-1834. Residues Glu-1882 and Glu-1946 each contribute to the Ca(2+) site. Residues Ala-1996, Glu-2149, and Lys-2152 each contribute to the ATP site. A helical membrane pass occupies residues 2203-2223 (LWGSISFNLAVFINIIIAFFY). Residues 2224–2235 (PYMEGASTGVLD) lie on the Extracellular side of the membrane. The helical transmembrane segment at 2236–2256 (SPLISLLFWILICFSIAALFT) threads the bilayer. The Cytoplasmic segment spans residues 2257 to 2264 (KRYSIRPL). A helical membrane pass occupies residues 2265–2285 (IVALILRSIYYLGIGPTLNIL). Residues 2286–2325 (GALNLTNKIVFVVSFVGNRGTFIRGYKAMVMDMEFLYHVG) are Extracellular-facing. The chain crosses the membrane as a helical span at residues 2326 to 2346 (YILTSVLGLFAHELFYSILLF). Topologically, residues 2347–2368 (DLIYREETLFNVIKSVTRNGRS) are cytoplasmic. A helical membrane pass occupies residues 2369-2389 (ILLTALLALILVYLFSIVGFL). Residues 2390–2496 (FLKDDFILEV…ESLFPARVVY (107 aa)) are Extracellular-facing. The cysteines at positions 2455 and 2461 are disulfide-linked. A helical membrane pass occupies residues 2497 to 2517 (DLLFFFIVIIIVLNLIFGVII). The Cytoplasmic segment spans residues 2518-2671 (DTFADLRSEK…FVDVQNCISR (154 aa)). ATP-binding residues include Cys-2538 and Phe-2539. Cys-2538 contributes to the Zn(2+) binding site. The Zn(2+) site is built by Cys-2541 and His-2558. 4 residues coordinate ATP: Lys-2560, His-2563, Asn-2564, and Met-2565. Residue His-2563 coordinates Zn(2+). Thr-2581 is a Ca(2+) binding site. 2 positions are modified to phosphoserine: Ser-2609 and Ser-2670.

It belongs to the InsP3 receptor family. As to quaternary structure, homotetramer. Homodimer. Interacts with TRPC1, TRPC3 and TRPC4. Interacts with TRPV4. Interacts with SIGMAR1. Interacts with PML and AKT1. Interacts with IRAG2 (via coiled-coil domain). Interacts with CABP1. Interacts with TMBIM4/LFG4. Interacts with CEMIP. Interacts with TESPA1. Interacts with TMEM203. Interacts with BOK; regulates ITPR3 expression. Interacts with BCL2L10. Interacts with CHGA and CHGB. Post-translationally, phosphorylated by AKT1 on serine and/or threonine residues. Expressed in intestinal crypt and villus epithelial cells.

Its subcellular location is the endoplasmic reticulum membrane. It is found in the cytoplasmic vesicle. It localises to the secretory vesicle membrane. The enzyme catalyses Ca(2+)(in) = Ca(2+)(out). Inositol 1,4,5-trisphosphate-gated calcium channel is regulated by cytosolic calcium in a biphasic manner. At low concentrations, cytosolic calcium binds at a high-affinity juxtamembrane domain (JD) calcium binding site, allowing ITPR3 to activate by escaping a low-energy resting state through an ensemble of preactivated states. At high cytosolic calcium concentrations, ITPR3 preferentially enters an inhibited state stabilized by calcium binding at a second, low-affinity cytoplasmic domain (CD) calcium binding site. Functionally, inositol 1,4,5-trisphosphate-gated calcium channel that, upon 1D-myo-inositol 1,4,5-trisphosphate binding, transports calcium from the endoplasmic reticulum lumen to cytoplasm, thus releasing the intracellular calcium and therefore participates in cellular calcium ion homeostasis. 1D-myo-inositol 1,4,5-trisphosphate binds to the ligand-free channel without altering its global conformation, yielding the low-energy resting state, then progresses through resting-to preactivated transitions to the higher energy preactivated state, which increases affinity for calcium, promoting binding of the low basal cytosolic calcium at the juxtamembrane domain (JD) site, favoring the transition through the ensemble of high-energy intermediate states along the trajectory to the fully-open activated state. Upon opening, releases calcium in the cytosol where it can bind to the low-affinity cytoplasmic domain (CD) site and stabilizes the inhibited state to terminate calcium release. The sequence is that of Inositol 1,4,5-trisphosphate-gated calcium channel ITPR3 from Homo sapiens (Human).